A 142-amino-acid chain; its full sequence is uncharacterized protein (142 aa).

Topologically, residues 1–9 (MDMVSPVLN) are cytoplasmic. Residues 10–30 (LQSSILGELVGIIGKVFFLLI) form a helical membrane-spanning segment. The Extracellular segment spans residues 31–41 (EEIKYPIITPK). Residues 42 to 62 (IIVDAQISSWSLFFFASICNL) traverse the membrane as a helical segment. The Cytoplasmic segment spans residues 63–101 (SAKFREPIVTTSSIISLMESEKDLKNVNEYFQIMAKMLF). Residues 102-122 (ILENKIVVSLFVVFNISVLII) form a helical membrane-spanning segment. Residues 123–142 (VKSEPYSYGKVLFKPSSSIF) lie on the Extracellular side of the membrane.

It localises to the membrane. This is an uncharacterized protein from Saccharomyces cerevisiae (strain ATCC 204508 / S288c) (Baker's yeast).